The primary structure comprises 579 residues: Carboxysome shell carbonic anhydrase (579 aa).

Positions 72-95 are disordered; sequence GGGRVRSARDQRQPGWVRRDKGAT. Basic and acidic residues predominate over residues 78–93; it reads SARDQRQPGWVRRDKG. Position 240 (Cys240) interacts with Zn(2+). The active-site Proton acceptor is the Asp242. 2 residues coordinate Zn(2+): His308 and Cys319.

The protein belongs to the beta-class carbonic anhydrase family. CsoSCA subfamily. In terms of assembly, homodimer. Zn(2+) serves as cofactor.

The protein localises to the carboxysome. It catalyses the reaction hydrogencarbonate + H(+) = CO2 + H2O. Its activity is regulated as follows. Inhibited by dithiothreitol, partially inhibited by acetatzolamide and cyanide. Its function is as follows. Reversible hydration of carbon dioxide. Essential for photosynthetic carbon dioxide fixation, supplies CO(2) to RuBisCO (ribulose bisphosphate carboxylase, cbbL-cbbS) in the carboxysome. The sequence is that of Carboxysome shell carbonic anhydrase from Parasynechococcus marenigrum (strain WH8102).